The following is a 507-amino-acid chain: ATP synthase subunit alpha 2 (507 aa).

171–178 lines the ATP pocket; it reads GDRATGKT.

Belongs to the ATPase alpha/beta chains family. In terms of assembly, F-type ATPases have 2 components, CF(1) - the catalytic core - and CF(0) - the membrane proton channel. CF(1) has five subunits: alpha(3), beta(3), gamma(1), delta(1), epsilon(1). CF(0) has three main subunits: a(1), b(2) and c(9-12). The alpha and beta chains form an alternating ring which encloses part of the gamma chain. CF(1) is attached to CF(0) by a central stalk formed by the gamma and epsilon chains, while a peripheral stalk is formed by the delta and b chains.

It is found in the cell inner membrane. The catalysed reaction is ATP + H2O + 4 H(+)(in) = ADP + phosphate + 5 H(+)(out). In terms of biological role, produces ATP from ADP in the presence of a proton gradient across the membrane. The alpha chain is a regulatory subunit. The chain is ATP synthase subunit alpha 2 from Gluconobacter oxydans (strain 621H) (Gluconobacter suboxydans).